Here is a 61-residue protein sequence, read N- to C-terminus: MAEFTEKVKSFLAESKRVLLVTKKPGMKEFKLAAKITGIGMILIGTIGMIIRIIGYLVTGS.

Residues 38-58 (GIGMILIGTIGMIIRIIGYLV) traverse the membrane as a helical segment.

Belongs to the SecE/SEC61-gamma family. In terms of assembly, component of the Sec protein translocase complex. Heterotrimer consisting of SecY (alpha), SecG (beta) and SecE (gamma) subunits. The heterotrimers can form oligomers, although 1 heterotrimer is thought to be able to translocate proteins. Interacts with the ribosome. May interact with SecDF, and other proteins may be involved.

The protein resides in the cell membrane. In terms of biological role, essential subunit of the Sec protein translocation channel SecYEG. Clamps together the 2 halves of SecY. May contact the channel plug during translocation. In Thermococcus kodakarensis (strain ATCC BAA-918 / JCM 12380 / KOD1) (Pyrococcus kodakaraensis (strain KOD1)), this protein is Protein translocase subunit SecE.